The chain runs to 212 residues: uncharacterized protein (212 aa).

4 consecutive transmembrane segments (helical) span residues 34-54 (IFGI…PAPG), 59-79 (FGVL…ELWL), 126-146 (ILMG…IPGT), and 171-191 (AGMI…YVFF).

It to R.meliloti ExoD.

It localises to the cell membrane. This is an uncharacterized protein from Synechocystis sp. (strain ATCC 27184 / PCC 6803 / Kazusa).